Here is a 53-residue protein sequence, read N- to C-terminus: Large ribosomal subunit protein bL32c (53 aa).

It belongs to the bacterial ribosomal protein bL32 family.

Its subcellular location is the plastid. The protein localises to the chloroplast. This Phaseolus vulgaris (Kidney bean) protein is Large ribosomal subunit protein bL32c.